A 338-amino-acid polypeptide reads, in one-letter code: Beta-ketoacyl-[acyl-carrier-protein] synthase III (338 aa).

Active-site residues include Cys119 and His261. Residues 262 to 266 (QANQR) form an ACP-binding region. The active site involves Asn291.

It belongs to the thiolase-like superfamily. FabH family. Homodimer.

It localises to the cytoplasm. It carries out the reaction malonyl-[ACP] + acetyl-CoA + H(+) = 3-oxobutanoyl-[ACP] + CO2 + CoA. The protein operates within lipid metabolism; fatty acid biosynthesis. Catalyzes the condensation reaction of fatty acid synthesis by the addition to an acyl acceptor of two carbons from malonyl-ACP. Catalyzes the first condensation reaction which initiates fatty acid synthesis and may therefore play a role in governing the total rate of fatty acid production. Possesses both acetoacetyl-ACP synthase and acetyl transacylase activities. Its substrate specificity determines the biosynthesis of branched-chain and/or straight-chain of fatty acids. The chain is Beta-ketoacyl-[acyl-carrier-protein] synthase III from Prochlorococcus marinus (strain NATL2A).